The primary structure comprises 308 residues: Microtubule integrity protein mal3 (308 aa).

In terms of domain architecture, Calponin-homology (CH) spans 2-103 (SESRQELLAW…FVQWAKRFWD (102 aa)). The tract at residues 117 to 162 (RGNRGPANTRVMNSSAGATGPSRRRQVSSGSSTPSMTKSSANNNNV) is disordered. Residues 144 to 162 (SSGSSTPSMTKSSANNNNV) show a composition bias toward low complexity. Residues 173-247 (RAKQAQQQIT…LYSTEDGFEL (75 aa)) enclose the EB1 C-terminal domain.

Belongs to the MAPRE family. Interacts with tea2.

It is found in the cytoplasm. The protein resides in the cytoskeleton. May play a role in regulating the integrity of microtubules possibly by influencing their stability. Involved in an anchoring mechanism to maintain tea2 and tip1 at growing microtubule ends. Strongly stimulates the ATPase activity of tea2. This chain is Microtubule integrity protein mal3 (mal3), found in Schizosaccharomyces pombe (strain 972 / ATCC 24843) (Fission yeast).